A 201-amino-acid polypeptide reads, in one-letter code: Large ribosomal subunit protein uL4 (201 aa).

Residues 45-71 (AQKTRAEVTGSGKKPWRQKGTGRARAG) form a disordered region.

Belongs to the universal ribosomal protein uL4 family. In terms of assembly, part of the 50S ribosomal subunit.

One of the primary rRNA binding proteins, this protein initially binds near the 5'-end of the 23S rRNA. It is important during the early stages of 50S assembly. It makes multiple contacts with different domains of the 23S rRNA in the assembled 50S subunit and ribosome. Functionally, forms part of the polypeptide exit tunnel. In Shewanella oneidensis (strain ATCC 700550 / JCM 31522 / CIP 106686 / LMG 19005 / NCIMB 14063 / MR-1), this protein is Large ribosomal subunit protein uL4.